Here is a 377-residue protein sequence, read N- to C-terminus: Ribosomal RNA large subunit methyltransferase G (377 aa).

It belongs to the methyltransferase superfamily. RlmG family.

The protein resides in the cytoplasm. The enzyme catalyses guanosine(1835) in 23S rRNA + S-adenosyl-L-methionine = N(2)-methylguanosine(1835) in 23S rRNA + S-adenosyl-L-homocysteine + H(+). Specifically methylates the guanine in position 1835 (m2G1835) of 23S rRNA. In Aeromonas salmonicida (strain A449), this protein is Ribosomal RNA large subunit methyltransferase G.